Reading from the N-terminus, the 191-residue chain is Elongation factor P (191 aa).

N6-(3,6-diaminohexanoyl)-5-hydroxylysine is present on Lys-34.

Belongs to the elongation factor P family. May be beta-lysylated on the epsilon-amino group of Lys-34 by the combined action of EpmA and EpmB, and then hydroxylated on the C5 position of the same residue by EpmC (if this protein is present). Lysylation is critical for the stimulatory effect of EF-P on peptide-bond formation. The lysylation moiety may extend toward the peptidyltransferase center and stabilize the terminal 3-CCA end of the tRNA. Hydroxylation of the C5 position on Lys-34 may allow additional potential stabilizing hydrogen-bond interactions with the P-tRNA.

Its subcellular location is the cytoplasm. Its pathway is protein biosynthesis; polypeptide chain elongation. Involved in peptide bond synthesis. Alleviates ribosome stalling that occurs when 3 or more consecutive Pro residues or the sequence PPG is present in a protein, possibly by augmenting the peptidyl transferase activity of the ribosome. Modification of Lys-34 is required for alleviation. This Colwellia psychrerythraea (strain 34H / ATCC BAA-681) (Vibrio psychroerythus) protein is Elongation factor P.